Reading from the N-terminus, the 348-residue chain is Holliday junction branch migration complex subunit RuvB (348 aa).

Residues A4 to Y184 form a large ATPase domain (RuvB-L) region. ATP contacts are provided by residues I23, R24, G65, K68, T69, T70, E131 to F133, R174, Y184, and R221. T69 serves as a coordination point for Mg(2+). Residues S185–D255 are small ATPAse domain (RuvB-S). Positions E258–E348 are head domain (RuvB-H). DNA-binding residues include R294, R313, and R318.

It belongs to the RuvB family. Homohexamer. Forms an RuvA(8)-RuvB(12)-Holliday junction (HJ) complex. HJ DNA is sandwiched between 2 RuvA tetramers; dsDNA enters through RuvA and exits via RuvB. An RuvB hexamer assembles on each DNA strand where it exits the tetramer. Each RuvB hexamer is contacted by two RuvA subunits (via domain III) on 2 adjacent RuvB subunits; this complex drives branch migration. In the full resolvosome a probable DNA-RuvA(4)-RuvB(12)-RuvC(2) complex forms which resolves the HJ.

It is found in the cytoplasm. It carries out the reaction ATP + H2O = ADP + phosphate + H(+). The RuvA-RuvB-RuvC complex processes Holliday junction (HJ) DNA during genetic recombination and DNA repair, while the RuvA-RuvB complex plays an important role in the rescue of blocked DNA replication forks via replication fork reversal (RFR). RuvA specifically binds to HJ cruciform DNA, conferring on it an open structure. The RuvB hexamer acts as an ATP-dependent pump, pulling dsDNA into and through the RuvAB complex. RuvB forms 2 homohexamers on either side of HJ DNA bound by 1 or 2 RuvA tetramers; 4 subunits per hexamer contact DNA at a time. Coordinated motions by a converter formed by DNA-disengaged RuvB subunits stimulates ATP hydrolysis and nucleotide exchange. Immobilization of the converter enables RuvB to convert the ATP-contained energy into a lever motion, pulling 2 nucleotides of DNA out of the RuvA tetramer per ATP hydrolyzed, thus driving DNA branch migration. The RuvB motors rotate together with the DNA substrate, which together with the progressing nucleotide cycle form the mechanistic basis for DNA recombination by continuous HJ branch migration. Branch migration allows RuvC to scan DNA until it finds its consensus sequence, where it cleaves and resolves cruciform DNA. This is Holliday junction branch migration complex subunit RuvB from Pseudomonas putida (strain W619).